The sequence spans 418 residues: 3-isopropylmalate dehydratase large subunit 1 (418 aa).

[4Fe-4S] cluster is bound by residues cysteine 298, cysteine 358, and cysteine 361.

Belongs to the aconitase/IPM isomerase family. LeuC type 2 subfamily. As to quaternary structure, heterodimer of LeuC and LeuD. Requires [4Fe-4S] cluster as cofactor.

It carries out the reaction (2R,3S)-3-isopropylmalate = (2S)-2-isopropylmalate. It participates in amino-acid biosynthesis; L-leucine biosynthesis; L-leucine from 3-methyl-2-oxobutanoate: step 2/4. In terms of biological role, catalyzes the isomerization between 2-isopropylmalate and 3-isopropylmalate, via the formation of 2-isopropylmaleate. This chain is 3-isopropylmalate dehydratase large subunit 1, found in Thermotoga maritima (strain ATCC 43589 / DSM 3109 / JCM 10099 / NBRC 100826 / MSB8).